The primary structure comprises 382 residues: Alkanesulfonate monooxygenase (382 aa).

This sequence belongs to the SsuD family.

It catalyses the reaction an alkanesulfonate + FMNH2 + O2 = an aldehyde + FMN + sulfite + H2O + 2 H(+). Catalyzes the desulfonation of aliphatic sulfonates. In Pseudomonas putida (strain ATCC 700007 / DSM 6899 / JCM 31910 / BCRC 17059 / LMG 24140 / F1), this protein is Alkanesulfonate monooxygenase.